Here is a 108-residue protein sequence, read N- to C-terminus: Class I hydrophobin eas (108 aa).

Positions 1–26 are cleaved as a signal peptide; it reads MQFTSVFTILAIAMTAAAAPAEVVPR. Cystine bridges form between Cys-35/Cys-86, Cys-44/Cys-80, Cys-45/Cys-71, and Cys-87/Cys-106.

It belongs to the fungal hydrophobin family. In terms of assembly, self-assembles to form functional amyloid fibrils called rodlets. Self-assembly into fibrillar rodlets occurs spontaneously at hydrophobic:hydrophilic interfaces and the rodlets further associate laterally to form amphipathic monolayers.

The protein resides in the secreted. Its subcellular location is the spore wall. Its function is as follows. Aerial growth, conidiation, and dispersal of filamentous fungi in the environment rely upon a capability of their secreting small amphipathic proteins called hydrophobins (HPBs) with low sequence identity. Class I can self-assemble into an outermost layer of rodlet bundles on aerial cell surfaces, conferring cellular hydrophobicity that supports fungal growth, development and dispersal; whereas class II form highly ordered films at water-air interfaces through intermolecular interactions but contribute nothing to the rodlet structure. Eas is a class I hydrophobin that forms functional amyloid fibrils called rodlets that facilitate spore formation and dispersal. This is Class I hydrophobin eas from Neurospora crassa (strain ATCC 24698 / 74-OR23-1A / CBS 708.71 / DSM 1257 / FGSC 987).